Here is a 218-residue protein sequence, read N- to C-terminus: Small ribosomal subunit protein uS3c (218 aa).

Residues 39 to 120 (IRNFMNKELL…IITCKVVGVT (82 aa)) form the KH type-2 domain.

The protein belongs to the universal ribosomal protein uS3 family. Part of the 30S ribosomal subunit.

It localises to the plastid. Its subcellular location is the chloroplast. The protein is Small ribosomal subunit protein uS3c (rps3) of Euglena gracilis.